Reading from the N-terminus, the 412-residue chain is MQYEKVKPPENGEKIRYENGKLIVPDNPIIPYFEGDGIGKDVVPAAIRVLDAAADKIGKEVVWFQVYAGEDAYKLYGNYLPDDTLNAIKEFRVALKGPLTTPVGGGYRSLNVTIRQVLDLYANVRPVYYLKGVPSPIKHPEKVNFVIFRENTEDVYAGIEWPRGSEEALKLIRFLKNEFGVTIREDSGIGIKPISEFATKRLVRMAIRYAIENNRKSVTLVHKGNIMKYTEGAFRDWGYEVAKQEFGEYCITEDELWDKYGGKQPEGKIVVKDRIADNMFQQILTRTDEYDVIALPNLNGDYLSDAAAALIGGLGIAPGSNIGDGIGVFEPVHGSAPKYAGQNKVNPTAEILTGALMFEYIGWKDASEMIKKAVEMTISSGIVTYDIHRHMGGTKVGTREFAEAVVENLQSL.

Threonine 100 is a binding site for NADP(+). 5 residues coordinate D-threo-isocitrate: serine 109, asparagine 111, arginine 115, arginine 125, and arginine 149. Aspartate 301 provides a ligand contact to Mg(2+). NADP(+) is bound by residues 333–339 (HGSAPKY), asparagine 346, tyrosine 385, and arginine 389.

The protein belongs to the isocitrate and isopropylmalate dehydrogenases family. Homodimer. The cofactor is Mg(2+). It depends on Mn(2+) as a cofactor.

The enzyme catalyses D-threo-isocitrate + NADP(+) = 2-oxoglutarate + CO2 + NADPH. Functionally, catalyzes the oxidative decarboxylation of isocitrate to 2-oxoglutarate and carbon dioxide with the concomitant reduction of NADP(+). NAD(+) can replace NADP(+) with low efficiency. This chain is Isocitrate dehydrogenase [NADP], found in Archaeoglobus fulgidus (strain ATCC 49558 / DSM 4304 / JCM 9628 / NBRC 100126 / VC-16).